An 825-amino-acid chain; its full sequence is E3 ubiquitin-protein ligase ICP0 (825 aa).

Over residues 1–10 (MEPRPGTSSR) the composition is skewed to polar residues. The disordered stretch occupies residues 1–121 (MEPRPGTSSR…VGEEEAEAGG (121 aa)). The segment covering 46 to 57 (DSEEETEVGISD) has biased composition (acidic residues). An RING-type zinc finger spans residues 126–167 (CAVCTDEIAPPLRCQSFPCLHPFCIPCMKTWIPLRNTCPLCN). Disordered stretches follow at residues 221–312 (RSLS…GGGP), 325–683 (PPAA…PAPG), and 803–825 (RHPW…GHGE). Residues 242 to 251 (TDDEDDDLAD) show a composition bias toward acidic residues. 3 stretches are compositionally biased toward low complexity: residues 273-283 (TRGTSQPAATR), 290-303 (PRSS…LRAG), and 350-367 (PPAR…VISD). Residues 368 to 379 (SPPPSPRRPAGP) are compositionally biased toward pro residues. 2 stretches are compositionally biased toward low complexity: residues 380–394 (GPLS…QVSS) and 402–439 (PQSS…DAAG). Polar residues predominate over residues 456–468 (RMTQAQTDTQAQS). Gly residues predominate over residues 479-491 (GSGGPGAEGGPGV). 2 stretches are compositionally biased toward low complexity: residues 492-510 (PRGT…GAAA) and 519-540 (DSGP…PLAP). Residues 552–563 (RAPDSDSGDRGH) show a composition bias toward basic and acidic residues. The segment covering 567–641 (APASAGAAPP…GGSVASASGA (75 aa)) has biased composition (low complexity). The span at 658–667 (GPRKCARKTR) shows a compositional bias: basic residues. The segment covering 811–825 (GAPAPAGDAPAGHGE) has biased composition (low complexity).

Post-translationally, auto-ubiquitinated.

It carries out the reaction S-ubiquitinyl-[E2 ubiquitin-conjugating enzyme]-L-cysteine + [acceptor protein]-L-lysine = [E2 ubiquitin-conjugating enzyme]-L-cysteine + N(6)-ubiquitinyl-[acceptor protein]-L-lysine.. Functionally, evades nuclear antiviral defenses triggered by dsDNA viruses. Acts during the initial stages of lytic infection and the reactivation of latent viral genome. Prevents the antiviral effect of nuclear bodies by degrading host PML and SP100. Prevents antiviral response to viral DNA induced by IFI16 by degrading it. Additionally, inhibits host IRF3 nuclear signaling to prevent interferon production by the infected cells. This chain is E3 ubiquitin-protein ligase ICP0 (RL2), found in Homo sapiens (Human).